The chain runs to 88 residues: Small ribosomal subunit protein bS20 (88 aa).

The interval 1 to 27 (MANSKSAKKRALQSEKRRQHNASRRSM) is disordered.

This sequence belongs to the bacterial ribosomal protein bS20 family.

In terms of biological role, binds directly to 16S ribosomal RNA. This chain is Small ribosomal subunit protein bS20, found in Shewanella sediminis (strain HAW-EB3).